We begin with the raw amino-acid sequence, 430 residues long: uncharacterized protein (430 aa).

Transmembrane regions (helical) follow at residues 13-33 (FFAA…FAFF), 47-67 (LAEL…GVVA), 88-108 (VVLF…ILFI), 138-158 (GLNQ…GAFM), 228-248 (LIFG…LPMF), 264-284 (SVFT…GTLI), 296-316 (IPIF…ILWV), 319-339 (AAAF…GGWM), 358-378 (FMMF…PKFV), and 383-403 (YLYY…FIAL).

Belongs to the major facilitator superfamily.

Its subcellular location is the cell membrane. This is an uncharacterized protein from Bacillus subtilis (strain 168).